The chain runs to 386 residues: MAEIPTSSNPSDDPETQKLNGNEEDYDHHHDEDPESDDENYEYALQIAEMLPFPMVMKTAIELDLLGIIATAGPDRQLSAAEIAAALPAAGNPDAPAMLDRMLYLLATYSVVTCTAVDGGASGGVVRKYGLAPVAKYFVSNEDGVSLGALISLNQGQAFLASWSKLKEAVLEGGIPFNKVHGMDVFHYQGTDPRFNEIFNKAMYDQSTYIIKKIVRRYKGFENIQRLVDVGGGLGHTLRVITSNYPSIKGINFDLPHVIQHAPTIPGVEHVGGDMFESIPNGDAIFMKCILHDWSDEHCLKILKNCYKALPRKGKVIVVEMNMIEEPQTTPLAKAISQLDVCMMTQSPGGKERTRREFQTLAEAAGFAEFNPVCHVAGFWVMEFLK.

Residues Ser207, Gly231, Asp254, Asp274, and Lys288 each contribute to the S-adenosyl-L-homocysteine site. Asp254 contacts S-adenosyl-L-methionine. The Proton acceptor role is filled by His292.

It belongs to the class I-like SAM-binding methyltransferase superfamily. Cation-independent O-methyltransferase family. As to quaternary structure, homodimer.

The catalysed reaction is dopamine + S-adenosyl-L-methionine = 4-methoxytyramine + S-adenosyl-L-homocysteine + H(+). It carries out the reaction 3,4-dihydroxy-5-methoxyphenethylamine + S-adenosyl-L-methionine = 3-hydroxy-4,5-dimethoxyphenethylamine + S-adenosyl-L-homocysteine + H(+). It catalyses the reaction 3-hydroxy-4,5-dimethoxyphenethylamine + S-adenosyl-L-methionine = mescaline + S-adenosyl-L-homocysteine + H(+). The enzyme catalyses 4-hydroxy-3,5-dimethoxyphenethylamine + S-adenosyl-L-methionine = mescaline + S-adenosyl-L-homocysteine + H(+). It participates in aromatic compound metabolism. It functions in the pathway alkaloid biosynthesis. In terms of biological role, O-methyltransferase participating in the biosynthesis of natural products derived from phenylethylamine, including mescaline, a natural hallucinogen potentially used in psychotherapeutic treatments. Catalyzes the O-methylation of mescaline para hydroxyl groups, using dopamine, 3,4-dihydroxy-5-methoxyphenethylamine, 3-hydroxy-4,5-dimethoxyphenethylamine and 4-hydroxy-3,5-dimethoxyphenethylamine as substrates. The polypeptide is O-methyltransferase 11 (Lophophora williamsii (Peyote)).